The following is a 398-amino-acid chain: Cation channel sperm-associated protein 3 (398 aa).

Over 1 to 48 the chain is Cytoplasmic; sequence MSQHRHQRHSRVISSSPVDTTSVGFCPTFKKFKRNDDECRAFVKRVIM. A helical membrane pass occupies residues 49–71; it reads SRFFKIIMISTVTSNAFFMALWT. Over 72 to 80 the chain is Extracellular; the sequence is SYDIRYRLF. The chain crosses the membrane as a helical span at residues 81-107; the sequence is RLLEFSEIFFVSICTSELSMKVYVDPI. Position 108 (Asn-108) is a topological domain, cytoplasmic. The helical transmembrane segment at 109–131 threads the bilayer; the sequence is YWKNGYNLLDVIIIIVMFLPYAL. The Extracellular segment spans residues 132 to 143; it reads RQLMGKQFTYLY. Residues 144–160 traverse the membrane as a helical segment; the sequence is IADGMQSLRILKLIGYS. Topologically, residues 161–168 are cytoplasmic; it reads QGIRTLIT. Residues 169 to 195 form a helical membrane-spanning segment; that stretch reads AVGQTVYTVASVLLLLFLLMYIFAILG. Topologically, residues 196 to 216 are extracellular; the sequence is FCLFGSPDNGDHDNWGNLAAA. The segment at residues 217-236 is an intramembrane region (helical; Pore-forming); it reads FFTLFSLATVDGWTDLQKQL. The Extracellular portion of the chain corresponds to 237-242; it reads DNREFA. A helical transmembrane segment spans residues 243–268; the sequence is LSRAFTIIFILLASFIFLNMFVGVMI. Over 269-398 the chain is Cytoplasmic; that stretch reads MHTEDSIRKF…PQSLEKVDEK (130 aa).

It belongs to the cation channel sperm-associated (TC 1.A.1.19) family. As to quaternary structure, component of the CatSper complex or CatSpermasome composed of the core pore-forming members CATSPER1, CATSPER2, CATSPER3 and CATSPER4 as well as auxiliary members CATSPERB, CATSPERG, CATSPERD, CATSPERE, CATSPERZ, C2CD6/CATSPERT, TMEM249, TMEM262 and EFCAB9. HSPA1 may be an additional auxiliary complex member. The core complex members CATSPER1, CATSPER2, CATSPER3 and CATSPER4 form a heterotetrameric channel. The auxiliary CATSPERB, CATSPERG, CATSPERD and CATSPERE subunits form a pavilion-like structure over the pore which stabilizes the complex through interactions with CATSPER4, CATSPER3, CATSPER1 and CATSPER2 respectively. TMEM262/CATSPERH interacts with CATSPERB, further stabilizing the complex. C2CD6/CATSPERT interacts at least with CATSPERD and is required for targeting the CatSper complex in the flagellar membrane. As to expression, testis-specific.

Its subcellular location is the cell projection. The protein localises to the cilium. It is found in the flagellum membrane. The enzyme catalyses Ca(2+)(in) = Ca(2+)(out). With respect to regulation, the CatSper calcium channel is indirectly activated by extracellular progesterone and prostaglandins following the sequence: progesterone &gt; PGF1-alpha = PGE1 &gt; PGA1 &gt; PGE2 &gt;&gt; PGD2. The CatSper calcium channel is directly inhibited by endocannabinoid 2-arachidonoylglycerol (2AG). Indirect activation by progesterone takes place via the following mechanism: progesterone binds and activates the acylglycerol lipase ABHD2, which in turn mediates hydrolysis of 2AG inhibitor, relieving inhibition of the CatSper channel. The primary effect of progesterone activation is to shift voltage dependence towards more physiological, negative membrane potentials; it is not mediated by metabotropic receptors and second messengers. Sperm capacitation enhances the effect of progesterone by providing additional negative shift. Also activated by the elevation of intracellular pH. Its function is as follows. Pore-forming subunit of the CatSper complex, a sperm-specific voltage-gated calcium channel that plays a central role in calcium-dependent physiological responses essential for successful fertilization, such as sperm hyperactivation, acrosome reaction and chemotaxis towards the oocyte. This is Cation channel sperm-associated protein 3 (CATSPER3) from Homo sapiens (Human).